The chain runs to 700 residues: Polyribonucleotide nucleotidyltransferase (700 aa).

Mg(2+) is bound by residues Asp487 and Asp493. One can recognise a KH domain in the interval 554-613 (PRLLTIKIHPDKIRDVIGKGGSTIQAITKDTGTQIDIQDDGTIVIASVNNAAAREAKRRI). An S1 motif domain is found at 623 to 691 (GRIYEGKVAK…KQGRIRLSIK (69 aa)).

It belongs to the polyribonucleotide nucleotidyltransferase family. Component of the RNA degradosome, which is a multiprotein complex involved in RNA processing and mRNA degradation. The cofactor is Mg(2+).

Its subcellular location is the cytoplasm. It carries out the reaction RNA(n+1) + phosphate = RNA(n) + a ribonucleoside 5'-diphosphate. Functionally, involved in mRNA degradation. Catalyzes the phosphorolysis of single-stranded polyribonucleotides processively in the 3'- to 5'-direction. In Xylella fastidiosa (strain M12), this protein is Polyribonucleotide nucleotidyltransferase.